The chain runs to 326 residues: D-threonate 4-phosphate dehydrogenase (326 aa).

2 residues coordinate substrate: H138 and T139. A divalent metal cation is bound by residues H168, H212, and H267. Residues K275, N284, and R293 each coordinate substrate.

Belongs to the PdxA family. PdxA2 subfamily. Homodimer. A divalent metal cation serves as cofactor.

It carries out the reaction 4-O-phospho-D-threonate + NAD(+) = dihydroxyacetone phosphate + CO2 + NADH. Functionally, catalyzes the NAD-dependent oxidation and subsequent decarboxylation of D-threonate 4-phosphate to produce dihydroxyacetone phosphate (DHAP). Can also use 4-hydroxy-L-threonine 4-phosphate as substrate. The polypeptide is D-threonate 4-phosphate dehydrogenase (Pectobacterium atrosepticum (strain SCRI 1043 / ATCC BAA-672) (Erwinia carotovora subsp. atroseptica)).